A 71-amino-acid chain; its full sequence is Cytochrome c oxidase subunit 8C, mitochondrial (71 aa).

A mitochondrion-targeting transit peptide spans 1–28; the sequence is MAHLPRVCPFIRRLRVALLCLRPGHRFA. Residues 29–39 are Mitochondrial matrix-facing; that stretch reads HSEPQRQRPAS. A helical transmembrane segment spans residues 40-63; sequence ALEMAVGIVVIFSAFLTPSAYVLS. Residues 64 to 71 lie on the Mitochondrial intermembrane side of the membrane; the sequence is NLSQFRRE.

The protein belongs to the cytochrome c oxidase VIII family. In terms of assembly, component of the cytochrome c oxidase (complex IV, CIV), a multisubunit enzyme composed of 14 subunits. The complex is composed of a catalytic core of 3 subunits MT-CO1, MT-CO2 and MT-CO3, encoded in the mitochondrial DNA, and 11 supernumerary subunits COX4I, COX5A, COX5B, COX6A, COX6B, COX6C, COX7A, COX7B, COX7C, COX8 and NDUFA4, which are encoded in the nuclear genome. The complex exists as a monomer or a dimer and forms supercomplexes (SCs) in the inner mitochondrial membrane with NADH-ubiquinone oxidoreductase (complex I, CI) and ubiquinol-cytochrome c oxidoreductase (cytochrome b-c1 complex, complex III, CIII), resulting in different assemblies (supercomplex SCI(1)III(2)IV(1) and megacomplex MCI(2)III(2)IV(2)).

It is found in the mitochondrion inner membrane. It participates in energy metabolism; oxidative phosphorylation. In terms of biological role, component of the cytochrome c oxidase, the last enzyme in the mitochondrial electron transport chain which drives oxidative phosphorylation. The respiratory chain contains 3 multisubunit complexes succinate dehydrogenase (complex II, CII), ubiquinol-cytochrome c oxidoreductase (cytochrome b-c1 complex, complex III, CIII) and cytochrome c oxidase (complex IV, CIV), that cooperate to transfer electrons derived from NADH and succinate to molecular oxygen, creating an electrochemical gradient over the inner membrane that drives transmembrane transport and the ATP synthase. Cytochrome c oxidase is the component of the respiratory chain that catalyzes the reduction of oxygen to water. Electrons originating from reduced cytochrome c in the intermembrane space (IMS) are transferred via the dinuclear copper A center (CU(A)) of subunit 2 and heme A of subunit 1 to the active site in subunit 1, a binuclear center (BNC) formed by heme A3 and copper B (CU(B)). The BNC reduces molecular oxygen to 2 water molecules using 4 electrons from cytochrome c in the IMS and 4 protons from the mitochondrial matrix. This is Cytochrome c oxidase subunit 8C, mitochondrial (COX8C) from Eulemur fulvus fulvus (Brown lemur).